Reading from the N-terminus, the 341-residue chain is Methionine import ATP-binding protein MetN 1 (341 aa).

The ABC transporter domain occupies 2 to 241; it reads IEFRQVSKTF…PKTTIAQNFV (240 aa). 38–45 provides a ligand contact to ATP; the sequence is GYSGAGKS.

The protein belongs to the ABC transporter superfamily. Methionine importer (TC 3.A.1.24) family. As to quaternary structure, the complex is composed of two ATP-binding proteins (MetN), two transmembrane proteins (MetI) and a solute-binding protein (MetQ).

The protein localises to the cell membrane. It carries out the reaction L-methionine(out) + ATP + H2O = L-methionine(in) + ADP + phosphate + H(+). The catalysed reaction is D-methionine(out) + ATP + H2O = D-methionine(in) + ADP + phosphate + H(+). Part of the ABC transporter complex MetNIQ involved in methionine import. Responsible for energy coupling to the transport system. This Staphylococcus aureus (strain MW2) protein is Methionine import ATP-binding protein MetN 1.